Here is a 67-residue protein sequence, read N- to C-terminus: UPF0181 protein KPK_1966 (67 aa).

The tract at residues 48-67 (EQIVARFEDEDEDQDEDEDD) is disordered. Over residues 55-67 (EDEDEDQDEDEDD) the composition is skewed to acidic residues.

This sequence belongs to the UPF0181 family.

In Klebsiella pneumoniae (strain 342), this protein is UPF0181 protein KPK_1966.